The following is a 179-amino-acid chain: Large ribosomal subunit protein uL5 (179 aa).

Belongs to the universal ribosomal protein uL5 family. In terms of assembly, part of the 50S ribosomal subunit; part of the 5S rRNA/L5/L18/L25 subcomplex. Contacts the 5S rRNA and the P site tRNA. Forms a bridge to the 30S subunit in the 70S ribosome.

In terms of biological role, this is one of the proteins that bind and probably mediate the attachment of the 5S RNA into the large ribosomal subunit, where it forms part of the central protuberance. In the 70S ribosome it contacts protein S13 of the 30S subunit (bridge B1b), connecting the 2 subunits; this bridge is implicated in subunit movement. Contacts the P site tRNA; the 5S rRNA and some of its associated proteins might help stabilize positioning of ribosome-bound tRNAs. The protein is Large ribosomal subunit protein uL5 of Pasteurella multocida (strain Pm70).